The chain runs to 409 residues: LL-diaminopimelate aminotransferase (409 aa).

The substrate site is built by Tyr-15 and Gly-42. Pyridoxal 5'-phosphate contacts are provided by residues Tyr-72, 108 to 109, Tyr-132, Asn-186, Tyr-217, and 245 to 247; these read AK and SFS. Substrate contacts are provided by Lys-109, Tyr-132, and Asn-186. Residue Lys-248 is modified to N6-(pyridoxal phosphate)lysine. Arg-256 and Asn-291 together coordinate pyridoxal 5'-phosphate. Positions 291 and 387 each coordinate substrate.

This sequence belongs to the class-I pyridoxal-phosphate-dependent aminotransferase family. LL-diaminopimelate aminotransferase subfamily. As to quaternary structure, homodimer. Requires pyridoxal 5'-phosphate as cofactor.

The catalysed reaction is (2S,6S)-2,6-diaminopimelate + 2-oxoglutarate = (S)-2,3,4,5-tetrahydrodipicolinate + L-glutamate + H2O + H(+). It functions in the pathway amino-acid biosynthesis; L-lysine biosynthesis via DAP pathway; LL-2,6-diaminopimelate from (S)-tetrahydrodipicolinate (aminotransferase route): step 1/1. In terms of biological role, involved in the synthesis of meso-diaminopimelate (m-DAP or DL-DAP), required for both lysine and peptidoglycan biosynthesis. Catalyzes the direct conversion of tetrahydrodipicolinate to LL-diaminopimelate. This is LL-diaminopimelate aminotransferase from Phocaeicola vulgatus (strain ATCC 8482 / DSM 1447 / JCM 5826 / CCUG 4940 / NBRC 14291 / NCTC 11154) (Bacteroides vulgatus).